A 241-amino-acid chain; its full sequence is MSMLFYTLITAFLIGVQAEPYTDSNVPEGDSVPEAHWTKLQHSLDTALRRARSAPAEPIAARVTGQTRNITVDPKLFKKRRLRSPRVLFSTQPPPTSSDTLDLDFQAHGTISFNRTHRSKRSSTHPVFHMGEFSVCDSVSVWVGDKTTATDIKGKEVTVLGEVNINNSVFKQYFFETKCRAPNPVESGCRGIDSKHWNSYCTTTHTFVKALTTDDKQAAWRFIRIDTACVCVLSRKAARRG.

Positions 1–18 (MSMLFYTLITAFLIGVQA) are cleaved as a signal peptide. A propeptide spanning residues 19–121 (EPYTDSNVPE…SFNRTHRSKR (103 aa)) is cleaved from the precursor. 3 N-linked (GlcNAc...) asparagine glycosylation sites follow: Asn69, Asn114, and Asn166. 3 disulfide bridges follow: Cys136-Cys201, Cys179-Cys229, and Cys189-Cys231. Residues Tyr173 and Lys209 each coordinate a 1-acyl-sn-glycero-3-phospho-(1D-myo-inositol). Lys209 is an a 1-acyl-sn-glycero-3-phospho-L-serine binding site.

It belongs to the NGF-beta family. Homodimer. The homodimer interacts with a single NTRK1 chain. The homodimer interacts with a single NGFR chain. The NGF dimer interacts with a single SORCS2 chain (via extracellular domain). The NGF precursor (proNGF) binds to a receptor complex formed by SORT1 and NGFR, which leads to NGF endocytosis. Both mature NGF and the immature NGF precursor (proNGF) interact with SORCS2 and with the heterodimer formed by SORCS2 and NGFR (via extracellular domains). The NGF precursor (proNGF) has much higher affinity for SORCS2 than mature NGF. The NGF precursor (proNGF) has much higher affinity for SORT1 than mature NGF. Interacts with ADAM10 in a divalent cation-dependent manner. Interacts with SORCS3. In terms of tissue distribution, detected in the granule and pyramidal cell layer in the hippocampus.

The protein resides in the secreted. It is found in the endosome lumen. Functionally, nerve growth factor is important for the development and maintenance of the sympathetic and sensory nervous systems. Extracellular ligand for the NTRK1 and NGFR receptors, activates cellular signaling cascades to regulate neuronal proliferation, differentiation and survival. The immature NGF precursor (proNGF) functions as a ligand for the heterodimeric receptor formed by SORCS2 and NGFR, and activates cellular signaling cascades that lead to inactivation of RAC1 and/or RAC2, reorganization of the actin cytoskeleton and neuronal growth cone collapse. In contrast to mature NGF, the precursor form (proNGF) promotes neuronal apoptosis (in vitro). Inhibits metalloproteinase-dependent proteolysis of platelet glycoprotein VI. Binds lysophosphatidylinositol and lysophosphatidylserine between the two chains of the homodimer. The lipid-bound form promotes histamine relase from mast cells, contrary to the lipid-free form. This is Beta-nerve growth factor (Ngf) from Rattus norvegicus (Rat).